Consider the following 233-residue polypeptide: Large ribosomal subunit protein uL1 (233 aa).

The protein belongs to the universal ribosomal protein uL1 family. As to quaternary structure, part of the 50S ribosomal subunit.

Binds directly to 23S rRNA. The L1 stalk is quite mobile in the ribosome, and is involved in E site tRNA release. Functionally, protein L1 is also a translational repressor protein, it controls the translation of the L11 operon by binding to its mRNA. This chain is Large ribosomal subunit protein uL1, found in Nautilia profundicola (strain ATCC BAA-1463 / DSM 18972 / AmH).